Consider the following 604-residue polypeptide: MKQAKKQGVLERFYYSSDEIIEKPFNWAQMWRLLSYVKPYRKTILPLSFLTVLIGTAVKLVIPILIGVYVLDQAITGRNSELLIQLIFIISGLYVLNYAANVLRIRWMNQLGQHVIYDLRQHLFTHVQRLSHRFFDQRSAGSILVRIMNDINSLQELFTSGVINLLTDLLLLAGVIIILFTLSPELTIAIMVTLPIMFFISTSLRKKIRRSWQTVRLKQSKLNSHLNESIQGIRVTQAFTQEEENMAYFDGVNQENYESWREATRKNAMFRPLVEMTNAIGTAVLIWYGATLIMNETITIGVFVSFAFYLGMFWEPISRLGQVYNQLLMGMASSERIFEFLDEQPNVKEKPNAIHNEKINGEISFEEVEFSYDEKRKALHAVSFSIPAGSTLALVGHTGSGKTTIANLISRFYDAAGGTIKIDGIPIKDLSLASLRSQISIVLQDTFIFSGTIMENIRFGRPNASDEEVMKASQAVGADEFISDLAEGYATEVEERGSVLSAGQRQLISFARALLADPAIIILDEATASIDTETEVKIQQALKTLLKGRTAVMIAHRLSTIRDADRIIVLDHGRKIEEGNHDQLLAKGGIYAGLVKAQYSTAIE.

The region spanning 45 to 329 is the ABC transmembrane type-1 domain; it reads LPLSFLTVLI…LGQVYNQLLM (285 aa). A run of 6 helical transmembrane segments spans residues 49–69, 82–102, 162–182, 184–204, 273–293, and 297–317; these read FLTVLIGTAVKLVIPILIGVY, LLIQLIFIISGLYVLNYAANV, VINLLTDLLLLAGVIIILFTL, PELTIAIMVTLPIMFFISTSL, LVEMTNAIGTAVLIWYGATLI, and TITIGVFVSFAFYLGMFWEPI. The 235-residue stretch at 363–597 folds into the ABC transporter domain; sequence ISFEEVEFSY…GGIYAGLVKA (235 aa). 396–403 is a binding site for ATP; the sequence is GHTGSGKT.

This sequence belongs to the ABC transporter superfamily.

Its subcellular location is the cell membrane. This is an uncharacterized protein from Bacillus subtilis (strain 168).